We begin with the raw amino-acid sequence, 329 residues long: Diaminopimelate epimerase (329 aa).

The substrate site is built by Asn-14 and Asn-73. The active-site Proton donor is the Cys-82. Residues 83 to 84 (GN), Asn-170, Asn-206, and 224 to 225 (ER) contribute to the substrate site. Catalysis depends on Cys-233, which acts as the Proton acceptor. 234–235 (GT) is a substrate binding site.

The protein belongs to the diaminopimelate epimerase family. As to quaternary structure, homodimer.

The protein resides in the cytoplasm. It carries out the reaction (2S,6S)-2,6-diaminopimelate = meso-2,6-diaminopimelate. It functions in the pathway amino-acid biosynthesis; L-lysine biosynthesis via DAP pathway; DL-2,6-diaminopimelate from LL-2,6-diaminopimelate: step 1/1. Its function is as follows. Catalyzes the stereoinversion of LL-2,6-diaminopimelate (L,L-DAP) to meso-diaminopimelate (meso-DAP), a precursor of L-lysine and an essential component of the bacterial peptidoglycan. In Listeria monocytogenes serotype 4a (strain HCC23), this protein is Diaminopimelate epimerase.